A 336-amino-acid chain; its full sequence is Glyceraldehyde-3-phosphate dehydrogenase (336 aa).

Residues 12-13 (RI), Asp34, and Ser120 each bind NAD(+). D-glyceraldehyde 3-phosphate is bound by residues 150 to 152 (SCT), Thr181, Arg198, 211 to 212 (TG), and Arg234. Cys151 acts as the Nucleophile in catalysis. Asn316 provides a ligand contact to NAD(+).

The protein belongs to the glyceraldehyde-3-phosphate dehydrogenase family. Homotetramer.

The protein localises to the cytoplasm. The enzyme catalyses D-glyceraldehyde 3-phosphate + phosphate + NAD(+) = (2R)-3-phospho-glyceroyl phosphate + NADH + H(+). The protein operates within carbohydrate degradation; glycolysis; pyruvate from D-glyceraldehyde 3-phosphate: step 1/5. Its function is as follows. Catalyzes the oxidative phosphorylation of glyceraldehyde 3-phosphate (G3P) to 1,3-bisphosphoglycerate (BPG) using the cofactor NAD. The first reaction step involves the formation of a hemiacetal intermediate between G3P and a cysteine residue, and this hemiacetal intermediate is then oxidized to a thioester, with concomitant reduction of NAD to NADH. The reduced NADH is then exchanged with the second NAD, and the thioester is attacked by a nucleophilic inorganic phosphate to produce BPG. The chain is Glyceraldehyde-3-phosphate dehydrogenase (gapA) from Staphylococcus aureus.